Here is a 35-residue protein sequence, read N- to C-terminus: Photosystem II reaction center protein Psb30 (35 aa).

A helical transmembrane segment spans residues 7–27; that stretch reads VFVQLLLLALIVLAGPAVILL.

Belongs to the Psb30/Ycf12 family. In terms of assembly, PSII is composed of 1 copy each of membrane proteins PsbA, PsbB, PsbC, PsbD, PsbE, PsbF, PsbH, PsbI, PsbJ, PsbK, PsbL, PsbM, PsbT, PsbX, PsbY, PsbZ, Psb30/Ycf12, peripheral proteins PsbO, CyanoQ (PsbQ), PsbU, PsbV and a large number of cofactors. It forms dimeric complexes.

The protein localises to the cellular thylakoid membrane. A core subunit of photosystem II (PSII), probably helps stabilize the reaction center. The sequence is that of Photosystem II reaction center protein Psb30 from Synechococcus sp. (strain JA-3-3Ab) (Cyanobacteria bacterium Yellowstone A-Prime).